Consider the following 139-residue polypeptide: Protein Turandot B (139 aa).

An N-terminal signal peptide occupies residues 1-21 (MNFNMSMICFALLLIVTLCSA).

Belongs to the Turandot family.

Its subcellular location is the secreted. A humoral factor that may play a role in stress tolerance. This Drosophila yakuba (Fruit fly) protein is Protein Turandot B.